We begin with the raw amino-acid sequence, 371 residues long: Sensor histidine kinase YvfT (371 aa).

Residues 1-10 (MKKAISIFPK) are Extracellular-facing. A helical membrane pass occupies residues 11 to 31 (EFGFFPYIFLVYTIMPFLSLL). The Cytoplasmic portion of the chain corresponds to 32 to 38 (KESGVKQ). Residues 39 to 59 (GIGYGMLLLFVAAYRQLFCSV) form a helical membrane-spanning segment. Residues 60-71 (GKASFTYWLIVQ) lie on the Extracellular side of the membrane. The chain crosses the membrane as a helical span at residues 72-92 (MAVILMYSVFYNITYIYLGFF). Over 93–109 (PANFVGYYKEKTNFNRA) the chain is Cytoplasmic. The helical transmembrane segment at 110-130 (FCALIFILLFPCLYQFIANSV) threads the bilayer. The Extracellular portion of the chain corresponds to 131-135 (SLREL). Residues 136 to 156 (FSVLPFLVIMLISPFGIRSMF) form a helical membrane-spanning segment. The Cytoplasmic portion of the chain corresponds to 157 to 371 (RRIELEAKLA…LTIPLIKKAE (215 aa)). A Histidine kinase domain is found at 187–368 (DLHDTLGHTL…VVALTIPLIK (182 aa)). The residue at position 189 (His189) is a Phosphohistidine; by autocatalysis.

It is found in the cell membrane. The catalysed reaction is ATP + protein L-histidine = ADP + protein N-phospho-L-histidine.. Functionally, member of the two-component regulatory system YvfT/YvfU. Probably activates YvfU by phosphorylation. The protein is Sensor histidine kinase YvfT (yvfT) of Bacillus subtilis (strain 168).